Consider the following 421-residue polypeptide: UDP-N-acetylglucosamine 1-carboxyvinyltransferase (421 aa).

23 to 24 is a phosphoenolpyruvate binding site; that stretch reads KN. Arginine 92 is a binding site for UDP-N-acetyl-alpha-D-glucosamine. Cysteine 116 (proton donor) is an active-site residue. Cysteine 116 is subject to 2-(S-cysteinyl)pyruvic acid O-phosphothioketal. Residues 121-125, 161-164, aspartate 306, and isoleucine 328 contribute to the UDP-N-acetyl-alpha-D-glucosamine site; these read RPVDL and KVSV.

It belongs to the EPSP synthase family. MurA subfamily.

It is found in the cytoplasm. The catalysed reaction is phosphoenolpyruvate + UDP-N-acetyl-alpha-D-glucosamine = UDP-N-acetyl-3-O-(1-carboxyvinyl)-alpha-D-glucosamine + phosphate. The protein operates within cell wall biogenesis; peptidoglycan biosynthesis. Its function is as follows. Cell wall formation. Adds enolpyruvyl to UDP-N-acetylglucosamine. The protein is UDP-N-acetylglucosamine 1-carboxyvinyltransferase of Vibrio vulnificus (strain CMCP6).